Reading from the N-terminus, the 172-residue chain is NAD(P)H-quinone oxidoreductase subunit I, chloroplastic (172 aa).

2 consecutive 4Fe-4S ferredoxin-type domains span residues 55 to 84 and 95 to 124; these read GRIHFEFDKCIACEVCVRVCPIDLPVVDWK and LNYSIDFGICIFCGNCVEYCPTNCLSMTEE. [4Fe-4S] cluster is bound by residues cysteine 64, cysteine 67, cysteine 70, cysteine 74, cysteine 104, cysteine 107, cysteine 110, and cysteine 114.

This sequence belongs to the complex I 23 kDa subunit family. NDH is composed of at least 16 different subunits, 5 of which are encoded in the nucleus. It depends on [4Fe-4S] cluster as a cofactor.

It localises to the plastid. The protein resides in the chloroplast thylakoid membrane. The catalysed reaction is a plastoquinone + NADH + (n+1) H(+)(in) = a plastoquinol + NAD(+) + n H(+)(out). It carries out the reaction a plastoquinone + NADPH + (n+1) H(+)(in) = a plastoquinol + NADP(+) + n H(+)(out). Functionally, NDH shuttles electrons from NAD(P)H:plastoquinone, via FMN and iron-sulfur (Fe-S) centers, to quinones in the photosynthetic chain and possibly in a chloroplast respiratory chain. The immediate electron acceptor for the enzyme in this species is believed to be plastoquinone. Couples the redox reaction to proton translocation, and thus conserves the redox energy in a proton gradient. The polypeptide is NAD(P)H-quinone oxidoreductase subunit I, chloroplastic (Crucihimalaya wallichii (Rock-cress)).